Reading from the N-terminus, the 597-residue chain is Aspartate--tRNA ligase (597 aa).

Residue Glu-171 participates in L-aspartate binding. The aspartate stretch occupies residues 195–198; that stretch reads QLFK. Arg-217 contacts L-aspartate. Residues 217–219 and Gln-226 each bind ATP; that span reads RDE. His-448 lines the L-aspartate pocket. Glu-482 provides a ligand contact to ATP. L-aspartate is bound at residue Arg-489. 534-537 serves as a coordination point for ATP; that stretch reads GLDR.

The protein belongs to the class-II aminoacyl-tRNA synthetase family. Type 1 subfamily. As to quaternary structure, homodimer.

The protein localises to the cytoplasm. It catalyses the reaction tRNA(Asp) + L-aspartate + ATP = L-aspartyl-tRNA(Asp) + AMP + diphosphate. Catalyzes the attachment of L-aspartate to tRNA(Asp) in a two-step reaction: L-aspartate is first activated by ATP to form Asp-AMP and then transferred to the acceptor end of tRNA(Asp). The polypeptide is Aspartate--tRNA ligase (Photobacterium profundum (strain SS9)).